Here is a 408-residue protein sequence, read N- to C-terminus: tRNA-specific 2-thiouridylase MnmA (408 aa).

Residues Ala-20–Ser-27 and Leu-46 each bind ATP. Cys-114 (nucleophile) is an active-site residue. An intrachain disulfide couples Cys-114 to Cys-210. Gly-138 contributes to the ATP binding site. Residues Arg-160 to Gln-162 form an interaction with tRNA region. Residue Cys-210 is the Cysteine persulfide intermediate of the active site.

The protein belongs to the MnmA/TRMU family.

The protein localises to the cytoplasm. The enzyme catalyses S-sulfanyl-L-cysteinyl-[protein] + uridine(34) in tRNA + AH2 + ATP = 2-thiouridine(34) in tRNA + L-cysteinyl-[protein] + A + AMP + diphosphate + H(+). Its function is as follows. Catalyzes the 2-thiolation of uridine at the wobble position (U34) of tRNA, leading to the formation of s(2)U34. The sequence is that of tRNA-specific 2-thiouridylase MnmA from Bartonella quintana (strain Toulouse) (Rochalimaea quintana).